The primary structure comprises 523 residues: METMKSKANCAQNPNCNIMIFHPTKEEFNDFDKYIAYMESQGAHRAGLAKIIPPKEWKARETYDNISEILIATPLQQVASGRAGVFTQYHKKKKAMTVGEYRHLANSKKYQTPPHQNFEDLERKYWKNRIYNSPIYGADISGSLFDENTKQWNLGHLGTIQDLLEKECGVVIEGVNTPYLYFGMWKTTFAWHTEDMDLYSINYLHLGEPKTWYVVPPEHGQRLERLARELFPGSSRGCGAFLRHKVALISPTVLKENGIPFNRITQEAGEFMVTFPYGYHAGFNHGFNCAEAINFATPRWIDYGKMASQCSCGEARVTFSMDAFVRILQPERYDLWKRGQDRAVVDHMEPRVPASQELSTQKEVQLPRRAALGLRQLPSHWARHSPWPMAARSGTRCHTLVCSSLPRRSAVSGTATQPRAAAVHSSKKPSSTPSSTPGPSAQIIHPSNGRRGRGRPPQKLRAQELTLQTPAKRPLLAGTTCTASGPEPEPLPEDGALMDKPVPLSPGLQHPVKASGCSWAPVP.

The region spanning 18-60 (IMIFHPTKEEFNDFDKYIAYMESQGAHRAGLAKIIPPKEWKAR) is the JmjN domain. A polyADP-ribosyl glutamic acid mark is found at Glu-26 and Glu-27. Tyr-136 contacts 2-oxoglutarate. Positions 146–312 (DENTKQWNLG…YGKMASQCSC (167 aa)) constitute a JmjC domain. Fe cation is bound by residues His-192 and Glu-194. Asn-202 and Lys-210 together coordinate 2-oxoglutarate. The Zn(2+) site is built by Cys-238 and His-244. Residue Lys-245 participates in 2-oxoglutarate binding. His-280 is a Fe cation binding site. Residues Cys-310 and Cys-312 each coordinate Zn(2+). The tract at residues 407–523 (RRSAVSGTAT…ASGCSWAPVP (117 aa)) is disordered. The span at 428–440 (KPSSTPSSTPGPS) shows a compositional bias: low complexity. The span at 448–458 (NGRRGRGRPPQ) shows a compositional bias: basic residues.

The protein belongs to the JHDM3 histone demethylase family. The cofactor is Fe(2+). Ubiquitinated via 'Lys-63'-linked ubiquitin chains. Deubiquitinated by USP14 with the help of TRIM14 leading to stabilization.

The protein localises to the nucleus. The enzyme catalyses N(6),N(6),N(6)-trimethyl-L-lysyl(9)-[histone H3] + 2 2-oxoglutarate + 2 O2 = N(6)-methyl-L-lysyl(9)-[histone H3] + 2 formaldehyde + 2 succinate + 2 CO2. In terms of biological role, histone demethylase that specifically demethylates 'Lys-9' of histone H3, thereby playing a central role in histone code. Does not demethylate histone H3 'Lys-4', H3 'Lys-27', H3 'Lys-36' nor H4 'Lys-20'. Demethylates both di- and trimethylated H3 'Lys-9' residue, while it has no activity on monomethylated residues. Demethylation of Lys residue generates formaldehyde and succinate. This Homo sapiens (Human) protein is Lysine-specific demethylase 4D (KDM4D).